The sequence spans 140 residues: ATP synthase epsilon chain (140 aa).

It belongs to the ATPase epsilon chain family. In terms of assembly, F-type ATPases have 2 components, CF(1) - the catalytic core - and CF(0) - the membrane proton channel. CF(1) has five subunits: alpha(3), beta(3), gamma(1), delta(1), epsilon(1). CF(0) has three main subunits: a, b and c.

The protein localises to the cell inner membrane. Produces ATP from ADP in the presence of a proton gradient across the membrane. This Colwellia psychrerythraea (strain 34H / ATCC BAA-681) (Vibrio psychroerythus) protein is ATP synthase epsilon chain.